The sequence spans 242 residues: ATP-dependent dethiobiotin synthetase BioD 1 (242 aa).

Residue 12-17 (NVGKTT) coordinates ATP. Mg(2+) is bound at residue threonine 16. Lysine 37 is a catalytic residue. Aspartate 66 contributes to the ATP binding site. Residues aspartate 66 and glutamate 124 each contribute to the Mg(2+) site. Residues 184 to 185 (NR), 213 to 215 (PYL), and glutamate 220 each bind ATP.

Belongs to the dethiobiotin synthetase family. In terms of assembly, homodimer. Requires Mg(2+) as cofactor.

The protein localises to the cytoplasm. It carries out the reaction (7R,8S)-7,8-diammoniononanoate + CO2 + ATP = (4R,5S)-dethiobiotin + ADP + phosphate + 3 H(+). Its pathway is cofactor biosynthesis; biotin biosynthesis; biotin from 7,8-diaminononanoate: step 1/2. Its function is as follows. Catalyzes a mechanistically unusual reaction, the ATP-dependent insertion of CO2 between the N7 and N8 nitrogen atoms of 7,8-diaminopelargonic acid (DAPA, also called 7,8-diammoniononanoate) to form a ureido ring. This is ATP-dependent dethiobiotin synthetase BioD 1 from Haemophilus influenzae (strain ATCC 51907 / DSM 11121 / KW20 / Rd).